The sequence spans 364 residues: Phospho-N-acetylmuramoyl-pentapeptide-transferase (364 aa).

10 helical membrane-spanning segments follow: residues 18-38 (SLLILLILLLGLLCLGFAQIL), 48-68 (LFPLAVSAICSAILGYVVVPV), 91-111 (GTPTMGGIFFVPVAVIIALIW), 114-134 (LDPAVLAVSIVTLAYMGIGWI), 154-174 (LILQIAIAVGFCIWTFLTQSA), 183-203 (GQIILPLGLFFWIIAGFVLVA), 214-234 (VDGLAGGTGSLAFLGLAALMA), 237-257 (NPGLMIFCACMSGGCLGFIVH), 280-300 (AIGILSGHVWGLFLVSGIFFV), and 343-363 (TQIVGLFYLINAGLAVLAVIS).

It belongs to the glycosyltransferase 4 family. MraY subfamily. Mg(2+) is required as a cofactor.

It is found in the cell inner membrane. The catalysed reaction is UDP-N-acetyl-alpha-D-muramoyl-L-alanyl-gamma-D-glutamyl-meso-2,6-diaminopimeloyl-D-alanyl-D-alanine + di-trans,octa-cis-undecaprenyl phosphate = di-trans,octa-cis-undecaprenyl diphospho-N-acetyl-alpha-D-muramoyl-L-alanyl-D-glutamyl-meso-2,6-diaminopimeloyl-D-alanyl-D-alanine + UMP. Its pathway is cell wall biogenesis; peptidoglycan biosynthesis. Functionally, catalyzes the initial step of the lipid cycle reactions in the biosynthesis of the cell wall peptidoglycan: transfers peptidoglycan precursor phospho-MurNAc-pentapeptide from UDP-MurNAc-pentapeptide onto the lipid carrier undecaprenyl phosphate, yielding undecaprenyl-pyrophosphoryl-MurNAc-pentapeptide, known as lipid I. The protein is Phospho-N-acetylmuramoyl-pentapeptide-transferase of Rippkaea orientalis (strain PCC 8801 / RF-1) (Cyanothece sp. (strain PCC 8801)).